The chain runs to 513 residues: ATP synthase subunit alpha (513 aa).

Residue 169–176 (GDRQTGKT) coordinates ATP.

Belongs to the ATPase alpha/beta chains family. F-type ATPases have 2 components, CF(1) - the catalytic core - and CF(0) - the membrane proton channel. CF(1) has five subunits: alpha(3), beta(3), gamma(1), delta(1), epsilon(1). CF(0) has three main subunits: a(1), b(2) and c(9-12). The alpha and beta chains form an alternating ring which encloses part of the gamma chain. CF(1) is attached to CF(0) by a central stalk formed by the gamma and epsilon chains, while a peripheral stalk is formed by the delta and b chains.

The protein resides in the cell inner membrane. The catalysed reaction is ATP + H2O + 4 H(+)(in) = ADP + phosphate + 5 H(+)(out). Produces ATP from ADP in the presence of a proton gradient across the membrane. The alpha chain is a regulatory subunit. This chain is ATP synthase subunit alpha, found in Ralstonia nicotianae (strain ATCC BAA-1114 / GMI1000) (Ralstonia solanacearum).